The sequence spans 434 residues: Histidinol dehydrogenase (434 aa).

NAD(+)-binding residues include tyrosine 130, glutamine 191, and asparagine 214. Substrate contacts are provided by serine 237, glutamine 259, and histidine 262. Glutamine 259 and histidine 262 together coordinate Zn(2+). Catalysis depends on proton acceptor residues glutamate 327 and histidine 328. 4 residues coordinate substrate: histidine 328, aspartate 361, glutamate 415, and histidine 420. Aspartate 361 provides a ligand contact to Zn(2+). Histidine 420 contributes to the Zn(2+) binding site.

The protein belongs to the histidinol dehydrogenase family. It depends on Zn(2+) as a cofactor.

It carries out the reaction L-histidinol + 2 NAD(+) + H2O = L-histidine + 2 NADH + 3 H(+). Its pathway is amino-acid biosynthesis; L-histidine biosynthesis; L-histidine from 5-phospho-alpha-D-ribose 1-diphosphate: step 9/9. In terms of biological role, catalyzes the sequential NAD-dependent oxidations of L-histidinol to L-histidinaldehyde and then to L-histidine. This is Histidinol dehydrogenase from Chromobacterium violaceum (strain ATCC 12472 / DSM 30191 / JCM 1249 / CCUG 213 / NBRC 12614 / NCIMB 9131 / NCTC 9757 / MK).